Reading from the N-terminus, the 199-residue chain is CASP-like protein 2B1 (199 aa).

At 1 to 26 (MSYLGVGLSPVNVAGTKMKLMDRKVR) the chain is on the cytoplasmic side. Residues 27–47 (LTELILRCSVCALALVAAILI) form a helical membrane-spanning segment. At 48 to 69 (ATDTQVKEIFTIQKKAKYTDMK) the chain is on the extracellular side. The chain crosses the membrane as a helical span at residues 70–90 (ALVFLVVVNGIAAAYSLLHMV). Over 91 to 106 (RCVVGMMKGSVLFSKP) the chain is Cytoplasmic. The helical transmembrane segment at 107–127 (LAWAIFSGDQAIAYLTVAGVA) threads the bilayer. Over 128-164 (AAAQSAAFAKLGEPELQWMKICTIYGKFCNQVGEGIA) the chain is Extracellular. The chain crosses the membrane as a helical span at residues 165 to 185 (TALLASIGMVLISSISAFALF). Over 186–199 (RLYGGNKAQQGSRW) the chain is Cytoplasmic.

This sequence belongs to the Casparian strip membrane proteins (CASP) family. As to quaternary structure, homodimer and heterodimers.

It is found in the cell membrane. This chain is CASP-like protein 2B1, found in Eutrema halophilum (Salt cress).